The sequence spans 417 residues: Secernin-3 (417 aa).

The propeptide occupies 1-5 (MYPRS). C6 is an active-site residue. The residue at position 6 (C6) is a Glyoxylic acid (Cys); alternate. C6 is subject to Pyruvic acid (Cys); alternate.

Belongs to the peptidase C69 family. Secernin subfamily.

In terms of biological role, plays a role in thermal nociception. In Danio rerio (Zebrafish), this protein is Secernin-3 (scrn3).